We begin with the raw amino-acid sequence, 296 residues long: 4-amino-4-deoxyprephenate dehydrogenase (296 aa).

Residues 9–288 (RCVVVGGAGA…EHGAELERLC (280 aa)) form the Prephenate/arogenate dehydrogenase domain.

Belongs to the prephenate/arogenate dehydrogenase family.

It carries out the reaction 4-amino-4-deoxyprephenate + NAD(+) = 3-(4-aminophenyl)pyruvate + CO2 + NADH + H(+). The protein operates within antibiotic biosynthesis. Functionally, involved in pristinamycin I biosynthesis. Probably catalyzes the formation of 3-(4-aminophenyl)pyruvate from 4-amino-4-deoxyprephenate. The protein is 4-amino-4-deoxyprephenate dehydrogenase of Streptomyces pristinaespiralis.